The chain runs to 512 residues: UDP-N-acetylmuramoyl-L-alanyl-D-glutamate--2,6-diaminopimelate ligase (512 aa).

Ser32 is a UDP-N-acetyl-alpha-D-muramoyl-L-alanyl-D-glutamate binding site. ATP is bound at residue 114-120; the sequence is GTNGKTT. Residues 156–157, Ser183, and Arg191 each bind UDP-N-acetyl-alpha-D-muramoyl-L-alanyl-D-glutamate; that span reads TT. Residue Lys223 is modified to N6-carboxylysine. Residues Arg395, 419-422, Gly469, and Glu473 contribute to the meso-2,6-diaminopimelate site; that span reads DNPR. A Meso-diaminopimelate recognition motif motif is present at residues 419 to 422; that stretch reads DNPR.

Belongs to the MurCDEF family. MurE subfamily. Mg(2+) serves as cofactor. In terms of processing, carboxylation is probably crucial for Mg(2+) binding and, consequently, for the gamma-phosphate positioning of ATP.

The protein resides in the cytoplasm. It carries out the reaction UDP-N-acetyl-alpha-D-muramoyl-L-alanyl-D-glutamate + meso-2,6-diaminopimelate + ATP = UDP-N-acetyl-alpha-D-muramoyl-L-alanyl-gamma-D-glutamyl-meso-2,6-diaminopimelate + ADP + phosphate + H(+). Its pathway is cell wall biogenesis; peptidoglycan biosynthesis. Catalyzes the addition of meso-diaminopimelic acid to the nucleotide precursor UDP-N-acetylmuramoyl-L-alanyl-D-glutamate (UMAG) in the biosynthesis of bacterial cell-wall peptidoglycan. The polypeptide is UDP-N-acetylmuramoyl-L-alanyl-D-glutamate--2,6-diaminopimelate ligase (Chlorobium phaeobacteroides (strain DSM 266 / SMG 266 / 2430)).